The chain runs to 283 residues: tRNA pseudouridine synthase A (283 aa).

The active-site Nucleophile is the Asp-52. Tyr-148 lines the substrate pocket.

This sequence belongs to the tRNA pseudouridine synthase TruA family. As to quaternary structure, homodimer.

The enzyme catalyses uridine(38/39/40) in tRNA = pseudouridine(38/39/40) in tRNA. Functionally, formation of pseudouridine at positions 38, 39 and 40 in the anticodon stem and loop of transfer RNAs. The protein is tRNA pseudouridine synthase A of Orientia tsutsugamushi (strain Ikeda) (Rickettsia tsutsugamushi).